Reading from the N-terminus, the 312-residue chain is DNA-directed RNA polymerase subunit alpha (312 aa).

An alpha N-terminal domain (alpha-NTD) region spans residues Met1–Thr229. An alpha C-terminal domain (alpha-CTD) region spans residues Ile246–Val312.

Belongs to the RNA polymerase alpha chain family. In terms of assembly, in cyanobacteria the RNAP catalytic core is composed of 2 alpha, 1 beta, 1 beta', 1 gamma and 1 omega subunit. When a sigma factor is associated with the core the holoenzyme is formed, which can initiate transcription.

It carries out the reaction RNA(n) + a ribonucleoside 5'-triphosphate = RNA(n+1) + diphosphate. DNA-dependent RNA polymerase catalyzes the transcription of DNA into RNA using the four ribonucleoside triphosphates as substrates. The polypeptide is DNA-directed RNA polymerase subunit alpha (Prochlorococcus marinus subsp. pastoris (strain CCMP1986 / NIES-2087 / MED4)).